The following is a 231-amino-acid chain: Ureidoacrylate amidohydrolase RutB (231 aa).

The active-site Proton acceptor is Asp-25. Lys-134 is a catalytic residue. The active-site Nucleophile is the Cys-167.

The protein belongs to the isochorismatase family. RutB subfamily.

It catalyses the reaction (Z)-3-ureidoacrylate + H2O + H(+) = (Z)-3-aminoacrylate + NH4(+) + CO2. It carries out the reaction (Z)-3-ureidoacrylate + H2O = (Z)-3-aminoacrylate + carbamate + H(+). The catalysed reaction is (Z)-2-methylureidoacrylate + H2O + H(+) = (Z)-2-methylaminoacrylate + NH4(+) + CO2. Functionally, hydrolyzes ureidoacrylate to form aminoacrylate and carbamate. The carbamate hydrolyzes spontaneously, thereby releasing one of the nitrogen atoms of the pyrimidine ring as ammonia and one of its carbon atoms as CO2. The protein is Ureidoacrylate amidohydrolase RutB of Escherichia coli O18:K1:H7 (strain IHE3034 / ExPEC).